Here is a 400-residue protein sequence, read N- to C-terminus: Cytohesin-3 (400 aa).

The stretch at 14–61 forms a coiled coil; sequence EDLSLEEREELLDIRRRKKELIDDIERLKYEIAEVMTEIDNLTSVEES. The SEC7 domain maps to 77 to 206; the sequence is FNMDPKKGIQ…IIMLNTSLHN (130 aa). The PH domain maps to 265–381; the sequence is PDREGWLLKL…WMKSIKASIS (117 aa). A 1,2-diacyl-sn-glycero-3-phospho-(1D-myo-inositol-3,4,5-trisphosphate)-binding positions include 273–281, R285, Y296, R306, and N355; that span reads KLGGGRVKT. Residues 392-400 are C-terminal autoinhibitory region; the sequence is RKRRIANKK.

In terms of assembly, interacts with TAMALIN. As to expression, present in all tissues tested, with highest protein levels in brain and adrenal.

It localises to the cytoplasm. It is found in the cytosol. The protein localises to the cell membrane. Its function is as follows. Promotes guanine-nucleotide exchange on ARF1. Promotes the activation of ARF factors through replacement of GDP with GTP. The polypeptide is Cytohesin-3 (Cyth3) (Rattus norvegicus (Rat)).